The sequence spans 334 residues: Nucleoid-associated protein YejK (334 aa).

This sequence belongs to the YejK family.

The protein resides in the cytoplasm. Its subcellular location is the nucleoid. The polypeptide is Nucleoid-associated protein YejK (Escherichia fergusonii (strain ATCC 35469 / DSM 13698 / CCUG 18766 / IAM 14443 / JCM 21226 / LMG 7866 / NBRC 102419 / NCTC 12128 / CDC 0568-73)).